Consider the following 366-residue polypeptide: tRNA/tmRNA (uracil-C(5))-methyltransferase (366 aa).

S-adenosyl-L-methionine contacts are provided by Gln-190, Tyr-218, Asn-223, Glu-239, and Asp-299. The Nucleophile role is filled by Cys-324. Catalysis depends on Glu-358, which acts as the Proton acceptor.

Belongs to the class I-like SAM-binding methyltransferase superfamily. RNA M5U methyltransferase family. TrmA subfamily.

The enzyme catalyses uridine(54) in tRNA + S-adenosyl-L-methionine = 5-methyluridine(54) in tRNA + S-adenosyl-L-homocysteine + H(+). It catalyses the reaction uridine(341) in tmRNA + S-adenosyl-L-methionine = 5-methyluridine(341) in tmRNA + S-adenosyl-L-homocysteine + H(+). Functionally, dual-specificity methyltransferase that catalyzes the formation of 5-methyluridine at position 54 (m5U54) in all tRNAs, and that of position 341 (m5U341) in tmRNA (transfer-mRNA). The polypeptide is tRNA/tmRNA (uracil-C(5))-methyltransferase (Salmonella choleraesuis (strain SC-B67)).